A 668-amino-acid polypeptide reads, in one-letter code: MTLYDENNLHIIKDNLRYLKLLSKQYPSISSASSEIINLQAILNLPKGTEHFISDVHGEYESFTHMLKNASGVIKRKIDDVFGTSLRECDKKNLATLIYYPEQKLDLIKKSEKNLEDWYKITLYRLIRLCQIVSSKYTRSKVRKSLPSDFAYIIEELLNEQGDRVDKQEYYNSIIETIIDIDRASEFIIAISNVIQRLVVDKLHIIGDIYDRGPGAEIIIEALSKHHSIDIQWGNHDIVWMGAAAGCEACIANVIRISLRYANLSTLEDGYGINLLPLATFAMDFYKEDNCENFKPRTIDKNLNETDIKLLSKMHKAISIIQFKLEGKIIKRRPEFKMEERLLLDKINIKEGTLNLSEKIYKLIDTNFPTLDKENPYELNERERDLVEKLTNSFINSEKLQRHIKFLYSNGSLYLKYNSNLLYHGCIPLNEDGSLKEVTLCKETLKGKSLLDKLDRLAREAYFFKKDPESKLYGMDMMWYLWCGSNSPLFGKKKMTTFERYFLDDKNTHKEEKNPYYKYRNDEKMCTMIFEEFELDADNSHIINGHIPVKTKEGENPIKANGKLLVIDGGFCKAYQPQTGIAGYTLIYNSYGLLLTSHEPFSSIHKAIVEGNDILSSTTILEHVSSRKRVLDTDSGEEIKKQIHDLEMLLVAYRKGLIKEENEANIRF.

It belongs to the FBPase class 3 family. The cofactor is Mn(2+).

It carries out the reaction beta-D-fructose 1,6-bisphosphate + H2O = beta-D-fructose 6-phosphate + phosphate. It functions in the pathway carbohydrate biosynthesis; gluconeogenesis. This Clostridium botulinum (strain Okra / Type B1) protein is Fructose-1,6-bisphosphatase class 3.